The chain runs to 207 residues: Pyrrolidone-carboxylate peptidase (207 aa).

Active-site residues include E80, C143, and H167.

It belongs to the peptidase C15 family. Homotetramer.

It is found in the cytoplasm. The enzyme catalyses Release of an N-terminal pyroglutamyl group from a polypeptide, the second amino acid generally not being Pro.. In terms of biological role, removes 5-oxoproline from various penultimate amino acid residues except L-proline. The sequence is that of Pyrrolidone-carboxylate peptidase from Coprothermobacter proteolyticus (strain ATCC 35245 / DSM 5265 / OCM 4 / BT).